The sequence spans 640 residues: SH3 domain-containing protein 21 (640 aa).

Residues 1–60 form a disordered region; the sequence is MVQSELQLQPRAGGRAEAASWGDRGNDKGGLGNPDMPSVSPGPQRPPKLSSLAYDSPPDY. An SH3 domain is found at 65-126; sequence SHPEVYRVLF…PDNFVLPPPP (62 aa). Disordered stretches follow at residues 133–361, 401–551, and 618–640; these read RKVV…PLGD, YFVA…PDSQ, and VQVM…TQTY. Positions 177 to 186 are enriched in basic and acidic residues; that stretch reads PSRDSQKLTS. The segment covering 210-220 has biased composition (polar residues); the sequence is TQTPQQRSVSS. 3 stretches are compositionally biased toward basic and acidic residues: residues 401–416, 459–469, and 494–532; these read YFVA…EAHT, ALEKPHPHEEA, and RPLR…EVPP. A coiled-coil region spans residues 572–626; sequence VDVTSLRGEVESLRRALELMEVQLERKLTDIWEELKSEKEQRRRLEVQVMQGTQK. Residues 621-640 show a composition bias toward polar residues; it reads MQGTQKSQTPRVIHTQTQTY.

The chain is SH3 domain-containing protein 21 (SH3D21) from Homo sapiens (Human).